Consider the following 182-residue polypeptide: MKKHILFLGAPGAGKGTQAELISQSNSYLHLSTGELLRKEIEMNTALGIQVKDIMNRGELVSDELVLKIVRQNLVKDNKGWILDGYPRNLSQANSLNEVLNEINQPLELVFYLDIPEEVLIKRLLLRGRKDDTEETIRTRVDIYKKTTEPLIQYFKDLSLIEYIDADRDLKTISSDIKQKMA.

12-17 is an ATP binding site; sequence GAGKGT. An NMP region spans residues 32-61; it reads STGELLRKEIEMNTALGIQVKDIMNRGELV. Residues Thr33, Arg38, 59-61, 85-88, and Gln92 each bind AMP; these read ELV and GYPR. Residues 126–132 form an LID region; sequence LRGRKDD. Arg127 contributes to the ATP binding site. Positions 129 and 140 each coordinate AMP. Arg168 provides a ligand contact to ATP.

It belongs to the adenylate kinase family. Monomer.

The protein resides in the cytoplasm. It carries out the reaction AMP + ATP = 2 ADP. The protein operates within purine metabolism; AMP biosynthesis via salvage pathway; AMP from ADP: step 1/1. Functionally, catalyzes the reversible transfer of the terminal phosphate group between ATP and AMP. Plays an important role in cellular energy homeostasis and in adenine nucleotide metabolism. This is Adenylate kinase from Prochlorococcus marinus (strain MIT 9301).